Consider the following 99-residue polypeptide: C-C motif chemokine 8 (99 aa).

An N-terminal signal peptide occupies residues 1 to 23; it reads MKVSAGILCLLLVAATFGTQVLA. Gln24 carries the pyrrolidone carboxylic acid modification. 2 disulfides stabilise this stretch: Cys34-Cys59 and Cys35-Cys75.

It belongs to the intercrine beta (chemokine CC) family. In terms of assembly, monomer or homodimer; in equilibrium.

It localises to the secreted. In terms of biological role, chemotactic factor that attracts monocytes. This protein can bind heparin. This Bos taurus (Bovine) protein is C-C motif chemokine 8 (CCL8).